Consider the following 607-residue polypeptide: Elongation factor 4 (607 aa).

One can recognise a tr-type G domain in the interval 11–193 (SKIRNFSIIA…QIVEKVPAPT (183 aa)). Residues 23–28 (DHGKST) and 140–143 (NKID) contribute to the GTP site.

Belongs to the TRAFAC class translation factor GTPase superfamily. Classic translation factor GTPase family. LepA subfamily.

It is found in the cell membrane. The catalysed reaction is GTP + H2O = GDP + phosphate + H(+). In terms of biological role, required for accurate and efficient protein synthesis under certain stress conditions. May act as a fidelity factor of the translation reaction, by catalyzing a one-codon backward translocation of tRNAs on improperly translocated ribosomes. Back-translocation proceeds from a post-translocation (POST) complex to a pre-translocation (PRE) complex, thus giving elongation factor G a second chance to translocate the tRNAs correctly. Binds to ribosomes in a GTP-dependent manner. The polypeptide is Elongation factor 4 (Bacillus cereus (strain AH820)).